Here is a 493-residue protein sequence, read N- to C-terminus: Succinate-semialdehyde dehydrogenase [NADP(+)] 2 (493 aa).

An NAD(+)-binding site is contributed by Gly242–Gly247. Residue Glu264 is part of the active site. The Nucleophile role is filled by Cys298.

Belongs to the aldehyde dehydrogenase family. In terms of assembly, homotetramer.

Its subcellular location is the cytoplasm. It carries out the reaction succinate semialdehyde + NAD(+) + H2O = succinate + NADH + 2 H(+). The enzyme catalyses succinate semialdehyde + NADP(+) + H2O = succinate + NADPH + 2 H(+). It functions in the pathway amino-acid degradation; 4-aminobutanoate degradation. Functionally, catalyzes the oxidation of succinate semialdehyde to succinate. Can utilize both NAD(+) or NADP(+) as a coenzyme. Functions in the GABA shunt, which allows to bypass 2 reactions in the TCA cycle by removing alpha-ketoglutarate from the cycle and feeding succinate and NADH back into the cycle. This chain is Succinate-semialdehyde dehydrogenase [NADP(+)] 2 (ssd2), found in Schizosaccharomyces pombe (strain 972 / ATCC 24843) (Fission yeast).